The following is an 872-amino-acid chain: Facilitated trehalose transporter Tret1 (872 aa).

Disordered stretches follow at residues 1–40, 53–217, 262–281, and 293–315; these read MSGRDNRGAGGGGGGGGGGSGGGHHHHQPLSSAMGKLKEK, VESN…KATS, SSSEEEFHKTRREFQGRKHQ, and KVLQGSSTDSDEEGDDAEHKRLI. Residues 1-406 are Cytoplasmic-facing; the sequence is MSGRDNRGAG…VYRPTTNPIY (406 aa). Over residues 8 to 22 the composition is skewed to gly residues; sequence GAGGGGGGGGGGSGG. Composition is skewed to low complexity over residues 55–68, 84–98, and 121–132; these read SNLSTSNTATSLDT, RHPQQSPSQSQQQQR, and PPTQQQPQQQHQ. Residues serine 262, serine 263, and serine 264 each carry the phosphoserine modification. Serine 334 and serine 336 each carry phosphoserine. Residues 340–361 are disordered; it reads FLTSRQHFQQQRSISTDSRKSR. Positions 344–355 are enriched in polar residues; the sequence is RQHFQQQRSIST. A helical transmembrane segment spans residues 407-427; it reads IWTQVLAALSVSLGSLVVGFV. At 428 to 454 the chain is on the extracellular side; that stretch reads SAYTSPALITMTNGNITSFEVTPQAAS. An N-linked (GlcNAc...) asparagine glycan is attached at asparagine 442. The chain crosses the membrane as a helical span at residues 455–475; it reads WVGGIMPLAGLLGGIAGGPFI. Over 476–488 the chain is Cytoplasmic; that stretch reads EYLGRRNTILTTA. Residues 489 to 509 traverse the membrane as a helical segment; it reads VPFIVSSLLIACAVNITMVLL. The Extracellular portion of the chain corresponds to 510–511; that stretch reads GR. A helical membrane pass occupies residues 512-532; the sequence is FLAGFCVGIASLSLPVYLGET. Over 533-538 the chain is Cytoplasmic; the sequence is VQPEVR. Residues 539 to 559 traverse the membrane as a helical segment; that stretch reads GTLGLLPTAFGNIGILLCFVA. Over 560 to 566 the chain is Extracellular; the sequence is GTYMDWS. A helical transmembrane segment spans residues 567 to 587; that stretch reads MLAFLGAALPVPFLILMFLIP. The Cytoplasmic portion of the chain corresponds to 588 to 650; the sequence is ETPRWYVSRG…ELLKRNNLKP (63 aa). A helical transmembrane segment spans residues 651-671; the sequence is LSISLGLMFFQQLSGINAVIF. Over 672 to 687 the chain is Extracellular; it reads YTVQIFKDAGSTIDGN. Residues 688–708 form a helical membrane-spanning segment; it reads VCTIIVGIVNFMATFIGIILI. Topologically, residues 709–714 are cytoplasmic; sequence DRAGRK. A helical transmembrane segment spans residues 715-735; sequence ILLYVSNVAMIITLFVLGGFF. At 736-755 the chain is on the extracellular side; sequence YCKDKAGIDVSNVGWLPLSC. A helical transmembrane segment spans residues 756-776; that stretch reads FVVYILGFSLGFGPIPWLMMG. The Cytoplasmic segment spans residues 777–784; it reads EILPAKIR. Residues 785–803 form a helical membrane-spanning segment; it reads GSAASVATAFNWTCTFVVT. Topologically, residues 804–816 are extracellular; sequence KTFQDMLDVIGSY. A helical transmembrane segment spans residues 817 to 837; that stretch reads GAFWLFGAICFIGLFFVIIYV. The Cytoplasmic segment spans residues 838–872; sequence PETQGKTLEDIERKMMGRVRRMSSVANIKPLSFNM. Phosphoserine is present on residues serine 860 and serine 861.

Belongs to the major facilitator superfamily. Sugar transporter (TC 2.A.1.1) family. Trehalose transporter subfamily.

The protein resides in the cell membrane. Functionally, low-capacity facilitative transporter for trehalose. Does not transport maltose, sucrose or lactose. Mediates the bidirectional transfer of trehalose. Responsible for the transport of trehalose synthesized in the fat body and the incorporation of trehalose into other tissues that require a carbon source, thereby regulating trehalose levels in the hemolymph. The protein is Facilitated trehalose transporter Tret1 of Drosophila willistoni (Fruit fly).